The following is a 355-amino-acid chain: Beta-ketoacyl-[acyl-carrier-protein] synthase III 1 (355 aa).

Catalysis depends on residues Cys122 and His280. Residues 281 to 285 (QANER) are ACP-binding. Asn311 is a catalytic residue.

This sequence belongs to the thiolase-like superfamily. FabH family. Homodimer.

Its subcellular location is the cytoplasm. The catalysed reaction is malonyl-[ACP] + acetyl-CoA + H(+) = 3-oxobutanoyl-[ACP] + CO2 + CoA. It functions in the pathway lipid metabolism; fatty acid biosynthesis. Functionally, catalyzes the condensation reaction of fatty acid synthesis by the addition to an acyl acceptor of two carbons from malonyl-ACP. Catalyzes the first condensation reaction which initiates fatty acid synthesis and may therefore play a role in governing the total rate of fatty acid production. Possesses both acetoacetyl-ACP synthase and acetyl transacylase activities. Its substrate specificity determines the biosynthesis of branched-chain and/or straight-chain of fatty acids. This is Beta-ketoacyl-[acyl-carrier-protein] synthase III 1 from Streptomyces avermitilis (strain ATCC 31267 / DSM 46492 / JCM 5070 / NBRC 14893 / NCIMB 12804 / NRRL 8165 / MA-4680).